We begin with the raw amino-acid sequence, 470 residues long: ATP synthase subunit beta (470 aa).

Residue 158 to 165 (GGAGVGKT) participates in ATP binding.

Belongs to the ATPase alpha/beta chains family. In terms of assembly, F-type ATPases have 2 components, CF(1) - the catalytic core - and CF(0) - the membrane proton channel. CF(1) has five subunits: alpha(3), beta(3), gamma(1), delta(1), epsilon(1). CF(0) has three main subunits: a(1), b(2) and c(9-12). The alpha and beta chains form an alternating ring which encloses part of the gamma chain. CF(1) is attached to CF(0) by a central stalk formed by the gamma and epsilon chains, while a peripheral stalk is formed by the delta and b chains.

The protein localises to the cell membrane. The catalysed reaction is ATP + H2O + 4 H(+)(in) = ADP + phosphate + 5 H(+)(out). Its function is as follows. Produces ATP from ADP in the presence of a proton gradient across the membrane. The catalytic sites are hosted primarily by the beta subunits. This Alkalihalophilus pseudofirmus (strain ATCC BAA-2126 / JCM 17055 / OF4) (Bacillus pseudofirmus) protein is ATP synthase subunit beta.